Reading from the N-terminus, the 597-residue chain is Dynein intermediate chain 3, ciliary (597 aa).

WD repeat units lie at residues 159-210 (EIKR…KPEF), 213-253 (KPVS…QAVE), 260-301 (SHHD…EPTE), 314-354 (ENAQ…PPEK), 361-400 (EHIG…SSIM), 404-444 (YHMS…KDPT), and 449-488 (VSDD…CTMQ). Disordered regions lie at residues 512-546 (RQRE…VAAA) and 562-597 (AAQQ…EKEG). The segment covering 528-542 (QDDDEEGGPDEEEDL) has biased composition (acidic residues). Over residues 584–597 (GSEKKDTENGEKEG) the composition is skewed to basic and acidic residues.

The protein belongs to the dynein intermediate chain family. As to quaternary structure, consists of at least two heavy chains (alpha and beta), three intermediate chains and several light chains.

It localises to the cytoplasm. The protein resides in the cytoskeleton. Its subcellular location is the cilium axoneme. Its function is as follows. May play a role in the regulation of dynein heavy chain activity. In Heliocidaris crassispina (Sea urchin), this protein is Dynein intermediate chain 3, ciliary.